A 590-amino-acid polypeptide reads, in one-letter code: Phosphomethylpyrimidine synthase (590 aa).

Substrate contacts are provided by residues N197, M226, Y255, H291, 311-313 (SRG), 352-355 (DGLR), and E391. H395 contacts Zn(2+). Y418 provides a ligand contact to substrate. H459 lines the Zn(2+) pocket. Residues C539, C542, and C547 each contribute to the [4Fe-4S] cluster site.

The protein belongs to the ThiC family. [4Fe-4S] cluster serves as cofactor.

The enzyme catalyses 5-amino-1-(5-phospho-beta-D-ribosyl)imidazole + S-adenosyl-L-methionine = 4-amino-2-methyl-5-(phosphooxymethyl)pyrimidine + CO + 5'-deoxyadenosine + formate + L-methionine + 3 H(+). Its pathway is cofactor biosynthesis; thiamine diphosphate biosynthesis. Functionally, catalyzes the synthesis of the hydroxymethylpyrimidine phosphate (HMP-P) moiety of thiamine from aminoimidazole ribotide (AIR) in a radical S-adenosyl-L-methionine (SAM)-dependent reaction. This chain is Phosphomethylpyrimidine synthase, found in Bacillus subtilis (strain 168).